A 343-amino-acid polypeptide reads, in one-letter code: MGETVTIQKNWQELIRPNKLQVTPGSDPARFATIVAEPLERGFGQTLGNALRRILLSSLQGAAVQSVHIDGVLHEFSSIAGVREDVTDIVLNIKDISIKMQGEGPKRMVVKKQGPGVVTAGDIQTVGDVVVLNPDLQICTLDEGAEIRMEFTVATGKGYVPAERNRPEDAPIGLIPVDSLYSPVRKVSYKVENTREGQILDYDKLTMTIETNGAISPDDSVAYAARILQDQLNVFVNFEEPRKEVAQEIIPDLAFNPAFLKKVDELELSVRSANCLKNDNIVYIGDLVQKSEAEMLRTPNFGRKSLNEIKEVLAQMGLHLGMEVPGWPPENIDELAKRFEDHY.

The segment at 1 to 239 (MGETVTIQKN…DQLNVFVNFE (239 aa)) is alpha N-terminal domain (alpha-NTD). The tract at residues 255–343 (FNPAFLKKVD…ELAKRFEDHY (89 aa)) is alpha C-terminal domain (alpha-CTD).

Belongs to the RNA polymerase alpha chain family. In terms of assembly, homodimer. The RNAP catalytic core consists of 2 alpha, 1 beta, 1 beta' and 1 omega subunit. When a sigma factor is associated with the core the holoenzyme is formed, which can initiate transcription.

The enzyme catalyses RNA(n) + a ribonucleoside 5'-triphosphate = RNA(n+1) + diphosphate. Its function is as follows. DNA-dependent RNA polymerase catalyzes the transcription of DNA into RNA using the four ribonucleoside triphosphates as substrates. This Bradyrhizobium diazoefficiens (strain JCM 10833 / BCRC 13528 / IAM 13628 / NBRC 14792 / USDA 110) protein is DNA-directed RNA polymerase subunit alpha.